Here is a 233-residue protein sequence, read N- to C-terminus: 5'-methylthioadenosine/S-adenosylhomocysteine nucleosidase (233 aa).

Glu-12 acts as the Proton acceptor in catalysis. Residues Gly-78, Ile-156, and 177–178 each bind substrate; that span reads ME. The Proton donor role is filled by Asp-201.

Belongs to the PNP/UDP phosphorylase family. MtnN subfamily.

It carries out the reaction S-adenosyl-L-homocysteine + H2O = S-(5-deoxy-D-ribos-5-yl)-L-homocysteine + adenine. The enzyme catalyses S-methyl-5'-thioadenosine + H2O = 5-(methylsulfanyl)-D-ribose + adenine. The catalysed reaction is 5'-deoxyadenosine + H2O = 5-deoxy-D-ribose + adenine. The protein operates within amino-acid biosynthesis; L-methionine biosynthesis via salvage pathway; S-methyl-5-thio-alpha-D-ribose 1-phosphate from S-methyl-5'-thioadenosine (hydrolase route): step 1/2. Catalyzes the irreversible cleavage of the glycosidic bond in both 5'-methylthioadenosine (MTA) and S-adenosylhomocysteine (SAH/AdoHcy) to adenine and the corresponding thioribose, 5'-methylthioribose and S-ribosylhomocysteine, respectively. Also cleaves 5'-deoxyadenosine, a toxic by-product of radical S-adenosylmethionine (SAM) enzymes, into 5-deoxyribose and adenine. In Listeria monocytogenes serovar 1/2a (strain ATCC BAA-679 / EGD-e), this protein is 5'-methylthioadenosine/S-adenosylhomocysteine nucleosidase.